Here is a 497-residue protein sequence, read N- to C-terminus: Cysteine--tRNA ligase (497 aa).

Cys-34 serves as a coordination point for Zn(2+). A 'HIGH' region motif is present at residues 36 to 46 (PTVYDFAHIGN). 3 residues coordinate Zn(2+): Cys-243, His-268, and Glu-272. A 'KMSKS' region motif is present at residues 301–305 (KMAKS). Residue Lys-304 participates in ATP binding. The segment at 478–497 (LMDYKDPETGERRTKWEVKR) is disordered. A compositionally biased stretch (basic and acidic residues) spans 480 to 497 (DYKDPETGERRTKWEVKR).

The protein belongs to the class-I aminoacyl-tRNA synthetase family. As to quaternary structure, monomer. It depends on Zn(2+) as a cofactor.

It is found in the cytoplasm. The catalysed reaction is tRNA(Cys) + L-cysteine + ATP = L-cysteinyl-tRNA(Cys) + AMP + diphosphate. The polypeptide is Cysteine--tRNA ligase (Chelativorans sp. (strain BNC1)).